A 791-amino-acid polypeptide reads, in one-letter code: Endonuclease MutS2 (791 aa).

ATP is bound at residue 339–346 (GPNTGGKT). The region spanning 715–790 (LDLRGERYET…GSGVTIADLK (76 aa)) is the Smr domain.

Belongs to the DNA mismatch repair MutS family. MutS2 subfamily. As to quaternary structure, homodimer. Binds to stalled ribosomes, contacting rRNA.

Functionally, endonuclease that is involved in the suppression of homologous recombination and thus may have a key role in the control of bacterial genetic diversity. Acts as a ribosome collision sensor, splitting the ribosome into its 2 subunits. Detects stalled/collided 70S ribosomes which it binds and splits by an ATP-hydrolysis driven conformational change. Acts upstream of the ribosome quality control system (RQC), a ribosome-associated complex that mediates the extraction of incompletely synthesized nascent chains from stalled ribosomes and their subsequent degradation. Probably generates substrates for RQC. This chain is Endonuclease MutS2, found in Halothermothrix orenii (strain H 168 / OCM 544 / DSM 9562).